Here is a 640-residue protein sequence, read N- to C-terminus: Probable potassium transport system protein Kup 2 (640 aa).

The tract at residues methionine 1–aspartate 20 is disordered. A run of 12 helical transmembrane segments spans residues leucine 30 to leucine 50, valine 71 to leucine 91, alanine 117 to isoleucine 137, alanine 155 to valine 175, valine 183 to phenylalanine 203, phenylalanine 224 to threonine 244, tryptophan 265 to isoleucine 285, proline 294 to alanine 314, leucine 363 to serine 383, tyrosine 385 to tryptophan 405, tryptophan 410 to leucine 430, and valine 437 to threonine 457.

It belongs to the HAK/KUP transporter (TC 2.A.72) family.

It localises to the cell inner membrane. The catalysed reaction is K(+)(in) + H(+)(in) = K(+)(out) + H(+)(out). In terms of biological role, transport of potassium into the cell. Likely operates as a K(+):H(+) symporter. The chain is Probable potassium transport system protein Kup 2 from Bradyrhizobium sp. (strain ORS 278).